We begin with the raw amino-acid sequence, 405 residues long: GTPase Obg (405 aa).

The Obg domain occupies 1 to 159; it reads MKFVDEVSIF…RDLKLELKVL (159 aa). Positions 127-148 are disordered; the sequence is NTRFKSSTNRAPRQTTPGKPGD. Residues 129 to 143 show a composition bias toward polar residues; the sequence is RFKSSTNRAPRQTTP. In terms of domain architecture, OBG-type G spans 160 to 333; the sequence is ADVGLLGLPN…LSQAIMRYLD (174 aa). GTP-binding positions include 166 to 173, 191 to 195, 213 to 216, 283 to 286, and 314 to 316; these read GLPNAGKS, FTTLV, DIPG, NKAD, and SAL. Residues S173 and T193 each contribute to the Mg(2+) site. The tract at residues 373–405 is disordered; sequence LRRAGVKSVEEADDDDFDDDDDDEGGAEIIYVR. A compositionally biased stretch (acidic residues) spans 383 to 398; sequence EADDDDFDDDDDDEGG.

Belongs to the TRAFAC class OBG-HflX-like GTPase superfamily. OBG GTPase family. Monomer. It depends on Mg(2+) as a cofactor.

It localises to the cytoplasm. Its function is as follows. An essential GTPase which binds GTP, GDP and possibly (p)ppGpp with moderate affinity, with high nucleotide exchange rates and a fairly low GTP hydrolysis rate. Plays a role in control of the cell cycle, stress response, ribosome biogenesis and in those bacteria that undergo differentiation, in morphogenesis control. This chain is GTPase Obg, found in Stutzerimonas stutzeri (strain A1501) (Pseudomonas stutzeri).